The primary structure comprises 944 residues: Isoleucine--tRNA ligase (944 aa).

A 'HIGH' region motif is present at residues 58 to 68 (PYANGQIHIGH). Glutamate 568 provides a ligand contact to L-isoleucyl-5'-AMP. The short motif at 609–613 (KMSKS) is the 'KMSKS' region element. Lysine 612 serves as a coordination point for ATP. The Zn(2+) site is built by cysteine 907, cysteine 910, cysteine 927, and cysteine 930.

Belongs to the class-I aminoacyl-tRNA synthetase family. IleS type 1 subfamily. Monomer. It depends on Zn(2+) as a cofactor.

It localises to the cytoplasm. It catalyses the reaction tRNA(Ile) + L-isoleucine + ATP = L-isoleucyl-tRNA(Ile) + AMP + diphosphate. In terms of biological role, catalyzes the attachment of isoleucine to tRNA(Ile). As IleRS can inadvertently accommodate and process structurally similar amino acids such as valine, to avoid such errors it has two additional distinct tRNA(Ile)-dependent editing activities. One activity is designated as 'pretransfer' editing and involves the hydrolysis of activated Val-AMP. The other activity is designated 'posttransfer' editing and involves deacylation of mischarged Val-tRNA(Ile). The protein is Isoleucine--tRNA ligase of Idiomarina loihiensis (strain ATCC BAA-735 / DSM 15497 / L2-TR).